Consider the following 498-residue polypeptide: Glycerol kinase (498 aa).

Thr-12 is an ADP binding site. Thr-12, Thr-13, and Ser-14 together coordinate ATP. Thr-12 is a binding site for sn-glycerol 3-phosphate. Arg-16 is a binding site for ADP. Residues Arg-82, Glu-83, Tyr-134, and Asp-244 each coordinate sn-glycerol 3-phosphate. Glycerol-binding residues include Arg-82, Glu-83, Tyr-134, Asp-244, and Gln-245. Residues Thr-266 and Gly-310 each coordinate ADP. ATP-binding residues include Thr-266, Gly-310, Gln-314, and Gly-411. Gly-411 and Asn-415 together coordinate ADP.

It belongs to the FGGY kinase family.

The catalysed reaction is glycerol + ATP = sn-glycerol 3-phosphate + ADP + H(+). It participates in polyol metabolism; glycerol degradation via glycerol kinase pathway; sn-glycerol 3-phosphate from glycerol: step 1/1. With respect to regulation, inhibited by fructose 1,6-bisphosphate (FBP). Its function is as follows. Key enzyme in the regulation of glycerol uptake and metabolism. Catalyzes the phosphorylation of glycerol to yield sn-glycerol 3-phosphate. The protein is Glycerol kinase of Chloroflexus aurantiacus (strain ATCC 29364 / DSM 637 / Y-400-fl).